We begin with the raw amino-acid sequence, 293 residues long: DegV domain-containing protein MG326 homolog (293 aa).

The DegV domain occupies 3–289; that stretch reads TAIITDSTAS…IDAFSISLLL (287 aa). Hexadecanoate is bound by residues T62 and S94.

Its function is as follows. May bind long-chain fatty acids, such as palmitate, and may play a role in lipid transport or fatty acid metabolism. The protein is DegV domain-containing protein MG326 homolog of Mycoplasma pneumoniae (strain ATCC 29342 / M129 / Subtype 1) (Mycoplasmoides pneumoniae).